The chain runs to 293 residues: Bifunctional protein FolD (293 aa).

NADP(+)-binding positions include 165–167 (GRG), Thr-192, and Val-233.

This sequence belongs to the tetrahydrofolate dehydrogenase/cyclohydrolase family. Homodimer.

The enzyme catalyses (6R)-5,10-methylene-5,6,7,8-tetrahydrofolate + NADP(+) = (6R)-5,10-methenyltetrahydrofolate + NADPH. The catalysed reaction is (6R)-5,10-methenyltetrahydrofolate + H2O = (6R)-10-formyltetrahydrofolate + H(+). It functions in the pathway one-carbon metabolism; tetrahydrofolate interconversion. In terms of biological role, catalyzes the oxidation of 5,10-methylenetetrahydrofolate to 5,10-methenyltetrahydrofolate and then the hydrolysis of 5,10-methenyltetrahydrofolate to 10-formyltetrahydrofolate. This Streptomyces griseus subsp. griseus (strain JCM 4626 / CBS 651.72 / NBRC 13350 / KCC S-0626 / ISP 5235) protein is Bifunctional protein FolD.